We begin with the raw amino-acid sequence, 1171 residues long: DExH-box ATP-dependent RNA helicase DExH15 chloroplastic (1171 aa).

Residues 1–58 (MNTLPVVSLTASSSFKFFHFPSLHRSLSHSPNFSFTKSLILNPNHLSFKSTLNSLSPS) constitute a chloroplast transit peptide. A compositionally biased stretch (polar residues) spans 53–62 (NSLSPSQSQL). The tract at residues 53–111 (NSLSPSQSQLYEEEDDEEEEEEDEDDDDEAADEYDNISDEIRNSDDDDDDEETEFSVDL) is disordered. Acidic residues-rich tracts occupy residues 63 to 90 (YEEE…DNIS) and 97 to 107 (DDDDDDEETEF). Residues 163-327 (IEAFLRGSSV…WIGEIHGKTE (165 aa)) form the Helicase ATP-binding domain. An ATP-binding site is contributed by 176 to 183 (APTSSGKT). The DEVH box motif lies at 275-278 (DEVH). One can recognise a Helicase C-terminal domain in the interval 424–620 (QISDTLWHLQ…ASYGMVLNLV (197 aa)).

The protein belongs to the DExH box helicase family.

Its subcellular location is the plastid. It is found in the chloroplast. The protein localises to the cytoplasmic granule. The enzyme catalyses ATP + H2O = ADP + phosphate + H(+). RNA helicase involved in group II intron splicing. Essential protein required during embryogenesis. Involved in post-transcriptional gene silencing. Modulates the determination of cell fate. Necessary for normal plasmodesmata (PD) development and aperture regulation. This chain is DExH-box ATP-dependent RNA helicase DExH15 chloroplastic (ISE2), found in Arabidopsis thaliana (Mouse-ear cress).